The primary structure comprises 360 residues: C-X-C chemokine receptor type 2 (360 aa).

Topologically, residues 1 to 48 are extracellular; it reads MEDFNMESDSFEDFWKGEDLSNYSYSSTLPPFLLDAAPCEPESLEINK. N-linked (GlcNAc...) asparagine glycosylation occurs at N22. A helical transmembrane segment spans residues 49-75; it reads YFVVIIYALVFLLSLLGNSLVMLVILY. Over 76–84 the chain is Cytoplasmic; it reads SRVGRSVTD. The helical transmembrane segment at 85-105 threads the bilayer; that stretch reads VYLLNLALADLLFALTLPIWA. The Extracellular portion of the chain corresponds to 106–120; the sequence is ASKVNGWIFGTFLCK. A disulfide bond links C119 and C196. A helical transmembrane segment spans residues 121-142; sequence VVSLLKEVNFYSGILLLACISV. Residues 143-163 are Cytoplasmic-facing; sequence DRYLAIVHATRTLTQKRYLVK. Residues 164 to 183 form a helical membrane-spanning segment; sequence FICLSIWGLSLLLALPVLLF. The Extracellular segment spans residues 184–208; sequence RRTVYSSNVSPACYEDMGNNTANWR. The helical transmembrane segment at 209–231 threads the bilayer; sequence MLLRILPQSFGFIVPLLIMLFCY. Topologically, residues 232–251 are cytoplasmic; the sequence is GFTLRTLFKAHMGQKHRAMR. Residues 252-273 traverse the membrane as a helical segment; sequence VIFAVVLIFLLCWLPYNLVLLA. Topologically, residues 274 to 294 are extracellular; the sequence is DTLMRTQVIQETCERRNHIDR. Residues 295 to 315 form a helical membrane-spanning segment; sequence ALDATEILGILHSCLNPLIYA. Topologically, residues 316-360 are cytoplasmic; the sequence is FIGQKFRHGLLKILAIHGLISKDSLPKDSRPSFVGSSSGHTSTTL. A phosphoserine mark is found at S347, S351, S352, and S353.

The protein belongs to the G-protein coupled receptor 1 family. In terms of assembly, interacts with IL8. Interacts with GNAI2. Post-translationally, phosphorylated upon ligand binding; which is required for desensitization. In terms of processing, (Microbial infection) Proteolytically cleaved by Staphylococcus aureus staphopain A/SspP. This cleavage inhibits CXCR2-dependent neutrophil activation and chemotaxis.

The protein localises to the cell membrane. In terms of biological role, receptor for interleukin-8 which is a powerful neutrophil chemotactic factor. Binding of IL-8 to the receptor causes activation of neutrophils. This response is mediated via a G-protein that activates a phosphatidylinositol-calcium second messenger system. Binds to IL-8 with high affinity. Also binds with high affinity to CXCL3, GRO/MGSA and NAP-2. The chain is C-X-C chemokine receptor type 2 (CXCR2) from Homo sapiens (Human).